Consider the following 181-residue polypeptide: Large ribosomal subunit protein uL10 (181 aa).

It belongs to the universal ribosomal protein uL10 family. In terms of assembly, part of the ribosomal stalk of the 50S ribosomal subunit. The N-terminus interacts with L11 and the large rRNA to form the base of the stalk. The C-terminus forms an elongated spine to which L12 dimers bind in a sequential fashion forming a multimeric L10(L12)X complex.

Forms part of the ribosomal stalk, playing a central role in the interaction of the ribosome with GTP-bound translation factors. This chain is Large ribosomal subunit protein uL10, found in Bradyrhizobium diazoefficiens (strain JCM 10833 / BCRC 13528 / IAM 13628 / NBRC 14792 / USDA 110).